The sequence spans 270 residues: Tryptophan synthase alpha chain (270 aa).

Active-site proton acceptor residues include E49 and D60.

It belongs to the TrpA family. As to quaternary structure, tetramer of two alpha and two beta chains.

It carries out the reaction (1S,2R)-1-C-(indol-3-yl)glycerol 3-phosphate + L-serine = D-glyceraldehyde 3-phosphate + L-tryptophan + H2O. The protein operates within amino-acid biosynthesis; L-tryptophan biosynthesis; L-tryptophan from chorismate: step 5/5. Its function is as follows. The alpha subunit is responsible for the aldol cleavage of indoleglycerol phosphate to indole and glyceraldehyde 3-phosphate. This chain is Tryptophan synthase alpha chain, found in Buchnera aphidicola subsp. Diuraphis noxia.